Reading from the N-terminus, the 578-residue chain is Sulfite reductase [NADPH] hemoprotein beta-component (578 aa).

[4Fe-4S] cluster is bound by residues C441, C447, C487, and C491. Siroheme is bound at residue C491.

It belongs to the nitrite and sulfite reductase 4Fe-4S domain family. Alpha(8)-beta(8). The alpha component is a flavoprotein, the beta component is a hemoprotein. Requires siroheme as cofactor. It depends on [4Fe-4S] cluster as a cofactor.

It catalyses the reaction hydrogen sulfide + 3 NADP(+) + 3 H2O = sulfite + 3 NADPH + 4 H(+). Its pathway is sulfur metabolism; hydrogen sulfide biosynthesis; hydrogen sulfide from sulfite (NADPH route): step 1/1. In terms of biological role, component of the sulfite reductase complex that catalyzes the 6-electron reduction of sulfite to sulfide. This is one of several activities required for the biosynthesis of L-cysteine from sulfate. The polypeptide is Sulfite reductase [NADPH] hemoprotein beta-component (Vibrio vulnificus (strain YJ016)).